Here is a 348-residue protein sequence, read N- to C-terminus: Chlorophyll(ide) b reductase NOL, chloroplastic (348 aa).

Residues 1–61 (MATWSGFNVS…TRQNLTVTPS (61 aa)) constitute a chloroplast transit peptide. Residue 84 to 108 (ITGSTKGIGYALAREFLKAGDNVVI) participates in NAD(+) binding. Y233 (proton acceptor) is an active-site residue.

The protein belongs to the short-chain dehydrogenases/reductases (SDR) family. In terms of assembly, interacts with NCY1 to form a complex that acts as a chlorophyll b reductase. Interacts with HCAR, RCCR and the LHCII complex. Part of a SGR1-CCE-LHCII complex, which acts in chlorophyll breakdown.

Its subcellular location is the plastid. It is found in the chloroplast thylakoid membrane. It carries out the reaction 7(1)-hydroxychlorophyllide a + NAD(+) = chlorophyllide b + NADH + H(+). The catalysed reaction is 7(1)-hydroxychlorophyllide a + NADP(+) = chlorophyllide b + NADPH + H(+). In terms of biological role, required for chlorophyll b degradation. Chlorophyll b, chlorophyllide b, pheophorbide b and pheophytin b can be used as substrates. Belongs to the chlorophyll catabolic enzymes (CCEs). In Arabidopsis thaliana (Mouse-ear cress), this protein is Chlorophyll(ide) b reductase NOL, chloroplastic (NOL).